The following is a 181-amino-acid chain: NADH-quinone oxidoreductase subunit I 2 (181 aa).

4Fe-4S ferredoxin-type domains follow at residues 44 to 74 (LNRY…VEGA) and 90 to 119 (RVYQ…MTND). [4Fe-4S] cluster contacts are provided by Cys-54, Cys-57, Cys-60, Cys-64, Cys-99, Cys-102, Cys-105, and Cys-109.

It belongs to the complex I 23 kDa subunit family. As to quaternary structure, NDH-1 is composed of 14 different subunits. Subunits NuoA, H, J, K, L, M, N constitute the membrane sector of the complex. [4Fe-4S] cluster is required as a cofactor.

The protein resides in the cell membrane. The enzyme catalyses a quinone + NADH + 5 H(+)(in) = a quinol + NAD(+) + 4 H(+)(out). Functionally, NDH-1 shuttles electrons from NADH, via FMN and iron-sulfur (Fe-S) centers, to quinones in the respiratory chain. The immediate electron acceptor for the enzyme in this species is believed to be menaquinone. Couples the redox reaction to proton translocation (for every two electrons transferred, four hydrogen ions are translocated across the cytoplasmic membrane), and thus conserves the redox energy in a proton gradient. The polypeptide is NADH-quinone oxidoreductase subunit I 2 (Mycolicibacterium paratuberculosis (strain ATCC BAA-968 / K-10) (Mycobacterium paratuberculosis)).